The following is a 102-amino-acid chain: Protamine-2 (102 aa).

A phosphoserine mark is found at serine 8, serine 10, and serine 37. 2 disordered regions span residues 15–41 (EVYG…PEQV) and 66–102 (IHRQ…CRRH).

This sequence belongs to the protamine P2 family. As to quaternary structure, interacts with TDRP. Post-translationally, proteolytic processing into mature chains is required for histone eviction during spermatogenesis. Transition proteins (TNP1 and TNP2) are required for processing. As to expression, testis.

It is found in the nucleus. The protein localises to the chromosome. In terms of biological role, protamines substitute for histones in the chromatin of sperm during the haploid phase of spermatogenesis. They compact sperm DNA into a highly condensed, stable and inactive complex. This is Protamine-2 (PRM2) from Pongo pygmaeus (Bornean orangutan).